A 588-amino-acid polypeptide reads, in one-letter code: Aspartate--tRNA ligase (588 aa).

Position 174 (Glu-174) interacts with L-aspartate. The segment at 198 to 201 (QLFK) is aspartate. Residue Arg-220 coordinates L-aspartate. Residues 220-222 (RDE) and Gln-229 contribute to the ATP site. His-448 is an L-aspartate binding site. Glu-482 provides a ligand contact to ATP. Arg-489 lines the L-aspartate pocket. ATP is bound at residue 534–537 (GIDR).

It belongs to the class-II aminoacyl-tRNA synthetase family. Type 1 subfamily. As to quaternary structure, homodimer.

The protein localises to the cytoplasm. It catalyses the reaction tRNA(Asp) + L-aspartate + ATP = L-aspartyl-tRNA(Asp) + AMP + diphosphate. In terms of biological role, catalyzes the attachment of L-aspartate to tRNA(Asp) in a two-step reaction: L-aspartate is first activated by ATP to form Asp-AMP and then transferred to the acceptor end of tRNA(Asp). The protein is Aspartate--tRNA ligase of Xanthomonas euvesicatoria pv. vesicatoria (strain 85-10) (Xanthomonas campestris pv. vesicatoria).